Here is an 87-residue protein sequence, read N- to C-terminus: Cytochrome c oxidase assembly factor 3, mitochondrial (87 aa).

Residues 47-69 (NNLLTAGALGVSVLAIYGYSIFS) traverse the membrane as a helical segment.

It belongs to the COA3 family.

It is found in the mitochondrion membrane. Plays a critical role in the biogenesis and activity of cytochrome c oxidase (COX) (complex IV). This is Cytochrome c oxidase assembly factor 3, mitochondrial (Ccdc56) from Drosophila melanogaster (Fruit fly).